Consider the following 449-residue polypeptide: Allantoinase (449 aa).

H59, H61, K146, H182, H238, and D311 together coordinate Zn(2+). K146 is modified (N6-carboxylysine).

The protein belongs to the metallo-dependent hydrolases superfamily. Allantoinase family. Homotetramer. Zn(2+) serves as cofactor. Post-translationally, carboxylation allows a single lysine to coordinate two zinc ions.

The enzyme catalyses (S)-allantoin + H2O = allantoate + H(+). It participates in nitrogen metabolism; (S)-allantoin degradation; allantoate from (S)-allantoin: step 1/1. Catalyzes the conversion of allantoin (5-ureidohydantoin) to allantoic acid by hydrolytic cleavage of the five-member hydantoin ring. This is Allantoinase from Deinococcus geothermalis (strain DSM 11300 / CIP 105573 / AG-3a).